A 45-amino-acid chain; its full sequence is Large ribosomal subunit protein bL34 (45 aa).

The segment at 1-27 is disordered; sequence MTKRTLGGTSRKRKRVSGFRVRMRSHT. The span at 10–27 shows a compositional bias: basic residues; that stretch reads SRKRKRVSGFRVRMRSHT.

It belongs to the bacterial ribosomal protein bL34 family.

The polypeptide is Large ribosomal subunit protein bL34 (Synechococcus sp. (strain CC9902)).